We begin with the raw amino-acid sequence, 278 residues long: Formamidopyrimidine-DNA glycosylase (278 aa).

The Schiff-base intermediate with DNA role is filled by proline 2. Glutamate 3 acts as the Proton donor in catalysis. Lysine 58 serves as the catalytic Proton donor; for beta-elimination activity. DNA is bound by residues histidine 91, arginine 109, and arginine 158. The FPG-type zinc finger occupies 243–277 (KVYDRKGLPCKVCKTPISQMVQGQRTTYFCSQCQK). The active-site Proton donor; for delta-elimination activity is arginine 267.

It belongs to the FPG family. Monomer. It depends on Zn(2+) as a cofactor.

The catalysed reaction is Hydrolysis of DNA containing ring-opened 7-methylguanine residues, releasing 2,6-diamino-4-hydroxy-5-(N-methyl)formamidopyrimidine.. The enzyme catalyses 2'-deoxyribonucleotide-(2'-deoxyribose 5'-phosphate)-2'-deoxyribonucleotide-DNA = a 3'-end 2'-deoxyribonucleotide-(2,3-dehydro-2,3-deoxyribose 5'-phosphate)-DNA + a 5'-end 5'-phospho-2'-deoxyribonucleoside-DNA + H(+). Involved in base excision repair of DNA damaged by oxidation or by mutagenic agents. Acts as a DNA glycosylase that recognizes and removes damaged bases. Has a preference for oxidized purines, such as 7,8-dihydro-8-oxoguanine (8-oxoG). Has AP (apurinic/apyrimidinic) lyase activity and introduces nicks in the DNA strand. Cleaves the DNA backbone by beta-delta elimination to generate a single-strand break at the site of the removed base with both 3'- and 5'-phosphates. The protein is Formamidopyrimidine-DNA glycosylase of Polynucleobacter necessarius subsp. necessarius (strain STIR1).